Reading from the N-terminus, the 515-residue chain is MAGGFSVSGSGVEFEAKITPIVIISCIMAATGGLMFGYDVGISGGVTSMDDFLREFFPTVLKKKHEDKESNYCKYDNQGLQLFTSSLYLAGLTATFFASYTTRRLGRRLTMLIAGVFFIVGVIFNGAAQNLAMLIVGRILLGCGVGFANQAVPLFLSEIAPTRIRGGLNILFQLNVTIGILFANLVNYGTAKIHPWGWRLSLSLAGIPAALLTLGALFVVDTPNSLIERGRLEEGKAVLRKIRGTDNVEPEFNEIVEASRVAQEVKHPFRNLLQRRNRPQLVIAVLLQIFQQFTGINAIMFYAPVLFNTLGFKTDASLYSAVITGAVNVLSTLVSVYSVDRVGRRMLLLEAGVQMFLSQVAIAVVLGIKVTDRSDNLGHGWAIMVVVMVCTFVSSFAWSWGPLGWLIPSETFPLETRSAGQSVTVCVNLLFTFVIAQAFLSMLCHLKYAIFAFFSAWVVVMSLFVLFFLPETKNIPIEEMTERVWKQHWFWKRFMDDADKHHVVPNGGKSNGATV.

The Cytoplasmic portion of the chain corresponds to Met-1–Lys-17. A helical membrane pass occupies residues Ile-18 to Tyr-38. Residues Asp-39 to Gln-78 lie on the Extracellular side of the membrane. Residues Gly-79–Ser-99 traverse the membrane as a helical segment. The Cytoplasmic segment spans residues Tyr-100–Arg-108. A helical membrane pass occupies residues Leu-109 to Gln-129. Over Asn-130 to Arg-138 the chain is Extracellular. Residues Ile-139–Ile-159 traverse the membrane as a helical segment. The Cytoplasmic segment spans residues Ala-160 to Arg-165. A helical transmembrane segment spans residues Gly-166 to Val-186. At Asn-187 to Arg-199 the chain is on the extracellular side. The helical transmembrane segment at Leu-200–Val-220 threads the bilayer. Topologically, residues Asp-221 to Gln-280 are cytoplasmic. A helical membrane pass occupies residues Leu-281–Phe-301. Residues Tyr-302–Asp-315 lie on the Extracellular side of the membrane. The chain crosses the membrane as a helical span at residues Ala-316–Val-336. At Tyr-337 to Leu-347 the chain is on the cytoplasmic side. A helical transmembrane segment spans residues Leu-348 to Ile-368. Residues Lys-369–His-379 lie on the Extracellular side of the membrane. Residues Gly-380–Trp-400 form a helical membrane-spanning segment. At Gly-401–Ser-422 the chain is on the cytoplasmic side. The helical transmembrane segment at Val-423–Leu-443 threads the bilayer. The Extracellular portion of the chain corresponds to Cys-444–Tyr-448. Residues Ala-449 to Leu-469 form a helical membrane-spanning segment. Residues Pro-470–Val-515 lie on the Cytoplasmic side of the membrane.

It belongs to the major facilitator superfamily. Sugar transporter (TC 2.A.1.1) family. In terms of tissue distribution, expressed in roots, shoots, leaf blades, leaf sheaths, anthers, ovaries and embryos.

It localises to the membrane. Functionally, mediates active uptake of hexoses by sugar:proton symport. Can transport glucose, fructose, mannose and galactose. Can transport xylose and ribose. The chain is Sugar transport protein MST4 from Oryza sativa subsp. japonica (Rice).